The primary structure comprises 161 residues: uncharacterized protein (161 aa).

Residues 16-36 (KLGLVVAIFFFMMGTTVVVLY) traverse the membrane as a helical segment.

Its subcellular location is the membrane. This is an uncharacterized protein from Encephalitozoon cuniculi (strain GB-M1) (Microsporidian parasite).